We begin with the raw amino-acid sequence, 386 residues long: Succinate--CoA ligase [ADP-forming] subunit beta (386 aa).

Residues 9–244 form the ATP-grasp domain; sequence KEILRKYGVP…HDEEDPLETR (236 aa). Residues lysine 46, 53-55, glutamate 99, cysteine 102, and glutamate 107 contribute to the ATP site; that span reads GRG. 2 residues coordinate Mg(2+): asparagine 199 and aspartate 213. Residues asparagine 264 and 321 to 323 contribute to the substrate site; that span reads GIM.

The protein belongs to the succinate/malate CoA ligase beta subunit family. As to quaternary structure, heterotetramer of two alpha and two beta subunits. Mg(2+) is required as a cofactor.

The catalysed reaction is succinate + ATP + CoA = succinyl-CoA + ADP + phosphate. It catalyses the reaction GTP + succinate + CoA = succinyl-CoA + GDP + phosphate. It functions in the pathway carbohydrate metabolism; tricarboxylic acid cycle; succinate from succinyl-CoA (ligase route): step 1/1. In terms of biological role, succinyl-CoA synthetase functions in the citric acid cycle (TCA), coupling the hydrolysis of succinyl-CoA to the synthesis of either ATP or GTP and thus represents the only step of substrate-level phosphorylation in the TCA. The beta subunit provides nucleotide specificity of the enzyme and binds the substrate succinate, while the binding sites for coenzyme A and phosphate are found in the alpha subunit. The polypeptide is Succinate--CoA ligase [ADP-forming] subunit beta (Rickettsia akari (strain Hartford)).